The chain runs to 464 residues: ATP synthase subunit beta (464 aa).

An ATP-binding site is contributed by Gly-153 to Thr-160.

The protein belongs to the ATPase alpha/beta chains family. As to quaternary structure, F-type ATPases have 2 components, CF(1) - the catalytic core - and CF(0) - the membrane proton channel. CF(1) has five subunits: alpha(3), beta(3), gamma(1), delta(1), epsilon(1). CF(0) has three main subunits: a(1), b(2) and c(9-12). The alpha and beta chains form an alternating ring which encloses part of the gamma chain. CF(1) is attached to CF(0) by a central stalk formed by the gamma and epsilon chains, while a peripheral stalk is formed by the delta and b chains.

The protein localises to the cell inner membrane. The catalysed reaction is ATP + H2O + 4 H(+)(in) = ADP + phosphate + 5 H(+)(out). Its function is as follows. Produces ATP from ADP in the presence of a proton gradient across the membrane. The catalytic sites are hosted primarily by the beta subunits. The polypeptide is ATP synthase subunit beta (Burkholderia lata (strain ATCC 17760 / DSM 23089 / LMG 22485 / NCIMB 9086 / R18194 / 383)).